Reading from the N-terminus, the 995-residue chain is Probable copper-transporting ATPase HMA5 (995 aa).

The Cytoplasmic portion of the chain corresponds to 1-299; sequence MATKLLSLTC…QGEIKQYYKS (299 aa). 2 HMA domains span residues 51–117 and 129–195; these read SRAV…FEAS and QVCR…FEAV. Cu(+) is bound by residues cysteine 62, cysteine 65, cysteine 140, and cysteine 143. One can recognise an HMA 3; degenerate domain in the interval 204–270; it reads SKIDLKIDGE…VIESTVFGHS (67 aa). Residues 300–321 traverse the membrane as a helical segment; the sequence is FLWSLVFTVPVFLTAMVFMYIP. The Extracellular segment spans residues 322-340; the sequence is GIKDLLMFKVINMLTVGEI. A helical transmembrane segment spans residues 341–360; it reads IRCVLATPVQFVIGWRFYTG. Residues 361-367 are Cytoplasmic-facing; it reads SYKALRR. The chain crosses the membrane as a helical span at residues 368 to 388; the sequence is GSANMDVLIALGTNAAYFYSL. Residues 389–406 are Extracellular-facing; it reads YTVLRAATSPDFKGVDFF. Residues 407–427 traverse the membrane as a helical segment; the sequence is ETSAMLISFIILGKYLEVMAK. Residues 428 to 561 lie on the Cytoplasmic side of the membrane; it reads GKTSQAIAKL…KAPVQKLADR (134 aa). A helical membrane pass occupies residues 562–584; the sequence is ISKFFVPLVIFLSFSTWLAWFLA. Topologically, residues 585-605 are extracellular; that stretch reads GKLHWYPESWIPSSMDSFELA. The chain crosses the membrane as a helical span at residues 606–623; it reads LQFGISVMVIACPCALGL. At 624-920 the chain is on the cytoplasmic side; sequence ATPTAVMVGT…DLSRKTFSRI (297 aa). Catalysis depends on aspartate 661, which acts as the 4-aspartylphosphate intermediate. Residues aspartate 866 and aspartate 870 each contribute to the Mg(2+) site. Residues 921 to 940 traverse the membrane as a helical segment; the sequence is RLNYVWALGYNLMGIPIAAG. The Extracellular segment spans residues 941–952; it reads VLFPGTRFRLPP. The helical transmembrane segment at 953–971 threads the bilayer; the sequence is WIAGAAMAASSVSVVCCSL. At 972–995 the chain is on the cytoplasmic side; the sequence is LLKNYKRPKKLDHLEIREIQVERV.

Belongs to the cation transport ATPase (P-type) (TC 3.A.3) family. Type IB subfamily. As to quaternary structure, interacts with ATX1. Expressed in roots and flowers.

It localises to the membrane. The catalysed reaction is Cu(+)(in) + ATP + H2O = Cu(+)(out) + ADP + phosphate + H(+). Functionally, involved in copper import into the cell. May play a role in copper detoxification in roots. The sequence is that of Probable copper-transporting ATPase HMA5 (HMA5) from Arabidopsis thaliana (Mouse-ear cress).